The chain runs to 510 residues: Cytochrome P450 monooxygenase penQ (510 aa).

A helical transmembrane segment spans residues Trp9–Val26. Asn148 and Asn341 each carry an N-linked (GlcNAc...) asparagine glycan. Residue Cys448 participates in heme binding. An N-linked (GlcNAc...) asparagine glycan is attached at Asn482.

This sequence belongs to the cytochrome P450 family. It depends on heme as a cofactor.

The protein resides in the membrane. The protein operates within secondary metabolite biosynthesis. In terms of biological role, cytochrome P450 monooxygenase; part of the gene cluster that mediates the biosynthesis of the indole diterpenes penitrems. The geranylgeranyl diphosphate (GGPP) synthase penG catalyzes the first step in penitrem biosynthesis via conversion of farnesyl pyrophosphate and isopentyl pyrophosphate into geranylgeranyl pyrophosphate (GGPP). Condensation of indole-3-glycerol phosphate with GGPP by the prenyl transferase penC then forms 3-geranylgeranylindole (3-GGI). Epoxidation by the FAD-dependent monooxygenase penM leads to a epoxidized-GGI that is substrate of the terpene cyclase penB for cyclization to yield paspaline. Paspaline is subsequently converted to 13-desoxypaxilline by the cytochrome P450 monooxygenase penP, the latter being then converted to paxilline by the cytochrome P450 monooxygenase penQ. Paxilline is converted to beta-paxitriol via C-10 ketoreduction by the short-chain dehydrogenase PC-15 which can be monoprenylated at the C-20 by the indole diterpene prenyltransferase penD. A two-step elimination (acetylation and elimination) process performed by the O-acetyltransferase PC-16 and the P.simplicissimum ptmI-ortholog not yet identified in P.crustosum, leads to the production of the prenylated form of penijanthine. The FAD-linked oxidoreductase ptmO then converts the prenylated form of penijanthine into PC-M5 which is in turn transformed into PC-M4 by the aromatic dimethylallyltransferase PC-22. A series of oxidation steps involving 4 cytochrome P450 monooxygenases (PC-21, PC-05, PC-23, PC-20) and a FAD-dependent monooxygenase (PC-14) are required for the transformation of PC-M4 to penitrems A and E. Synthesis of these final products is proposed to proceed via penitrems D and C (PC-21, PC-05, PC-14) and penitrems B and F (PC-21, PC-05, PC-14, PC-23). The protein is Cytochrome P450 monooxygenase penQ of Penicillium crustosum (Blue mold fungus).